A 210-amino-acid polypeptide reads, in one-letter code: Cytochrome c biogenesis ATP-binding export protein CcmA (210 aa).

In terms of domain architecture, ABC transporter spans 4–208; it reads VPTLSFSKLG…GAIPAQLLEL (205 aa). 39-46 serves as a coordination point for ATP; sequence GANGVGKT.

It belongs to the ABC transporter superfamily. CcmA exporter (TC 3.A.1.107) family. The complex is composed of two ATP-binding proteins (CcmA) and two transmembrane proteins (CcmB).

Its subcellular location is the cell inner membrane. The enzyme catalyses heme b(in) + ATP + H2O = heme b(out) + ADP + phosphate + H(+). Part of the ABC transporter complex CcmAB involved in the biogenesis of c-type cytochromes; once thought to export heme, this seems not to be the case, but its exact role is uncertain. Responsible for energy coupling to the transport system. The polypeptide is Cytochrome c biogenesis ATP-binding export protein CcmA (Albidiferax ferrireducens (strain ATCC BAA-621 / DSM 15236 / T118) (Rhodoferax ferrireducens)).